A 184-amino-acid polypeptide reads, in one-letter code: Tyrosine-protein kinase receptor Tie-1 (184 aa).

Residues Gln-1–Val-164 enclose the Protein kinase domain. The Proton acceptor role is filled by Asp-25. Tyr-53 is modified (phosphotyrosine; by autocatalysis).

Belongs to the protein kinase superfamily. Tyr protein kinase family. Tie subfamily. In terms of assembly, interacts with svep1. In terms of tissue distribution, expressed in most populations of endothelial cells in 24 hours embryos, including the endocardium.

Its subcellular location is the cell membrane. The catalysed reaction is L-tyrosyl-[protein] + ATP = O-phospho-L-tyrosyl-[protein] + ADP + H(+). Transmembrane tyrosine-protein kinase. Required for the formation of facial lymphatic structures and brain lymphatic endothelial cells. Also required for embryonic ventral and dorsal migration of parachordal lymphoblasts along the arterial intersegmental vessel. Plays a role in the embryonic formation of the dorsal longitudinal anastomotic vessel. This Danio rerio (Zebrafish) protein is Tyrosine-protein kinase receptor Tie-1 (tie1).